A 471-amino-acid polypeptide reads, in one-letter code: Mitochondrial distribution and morphology protein 10 (471 aa).

Residues S313–K338 form a disordered region. Residues S325–K338 show a composition bias toward polar residues.

Belongs to the MDM10 family. Component of the ER-mitochondria encounter structure (ERMES) or MDM complex, composed of MMM1, MDM10, MDM12 and MDM34. Associates with the mitochondrial outer membrane sorting assembly machinery SAM(core) complex.

Its subcellular location is the mitochondrion outer membrane. In terms of biological role, component of the ERMES/MDM complex, which serves as a molecular tether to connect the endoplasmic reticulum and mitochondria. Components of this complex are involved in the control of mitochondrial shape and protein biogenesis and may function in phospholipid exchange. MDM10 is involved in the late assembly steps of the general translocase of the mitochondrial outer membrane (TOM complex). Functions in the TOM40-specific route of the assembly of outer membrane beta-barrel proteins, including the association of TOM40 with the receptor TOM22 and small TOM proteins. Can associate with the SAM(core) complex as well as the MDM12-MMM1 complex, both involved in late steps of the major beta-barrel assembly pathway, that is responsible for biogenesis of all outer membrane beta-barrel proteins. May act as a switch that shuttles between both complexes and channels precursor proteins into the TOM40-specific pathway. Plays a role in mitochondrial morphology and in the inheritance of mitochondria. In Debaryomyces hansenii (strain ATCC 36239 / CBS 767 / BCRC 21394 / JCM 1990 / NBRC 0083 / IGC 2968) (Yeast), this protein is Mitochondrial distribution and morphology protein 10.